Reading from the N-terminus, the 539-residue chain is Neutral amino acid transporter B(0) (539 aa).

M1 carries the post-translational modification N-acetylmethionine. Over 1–52 the chain is Cytoplasmic; it reads MVADPPKGDPKGYAAAEPTANGVSMLVPIEDVGSLKGGRCGSGDQVRRCLRA. A helical transmembrane segment spans residues 53-82; it reads NLLVLLTVVAVVAGVALGLGVSGAGGAFAL. The Extracellular segment spans residues 83–95; that stretch reads GPARLEAFSFPGE. Residues 96–117 form a helical membrane-spanning segment; that stretch reads LLLRLLKMIILPLVVCSLIGGA. Residues 118-131 lie on the Cytoplasmic side of the membrane; sequence ASLDPSALGRLGAW. A helical transmembrane segment spans residues 132–154; sequence ALLFFLVTTLLASALGVGLALAL. Residues 155–223 lie on the Extracellular side of the membrane; the sequence is QPGAAFAAIN…GTLVKVPTGG (69 aa). Residues N164 and N213 are each glycosylated (N-linked (GlcNAc...) asparagine). Residues 224-247 form a helical membrane-spanning segment; it reads EVEGMNILGLVVFAIIFGVALRKL. Topologically, residues 248-256 are cytoplasmic; it reads GPEGELLIR. The chain crosses the membrane as a helical span at residues 257–284; sequence FFNSFNDATMVLVSWIMWYAPVGILFLV. Residues 285–305 lie on the Extracellular side of the membrane; that stretch reads AGKIVEMENVGLLFASLGKYI. Residues 306–327 form a helical membrane-spanning segment; the sequence is LCCLLGHAIHGLLTLPLIYFLF. Topologically, residues 328–332 are cytoplasmic; sequence ARKNP. The discontinuously helical intramembrane region spans 333-363; the sequence is YRFLWGIMTPLATAFGTSSSSATLPLMMKCV. Residues 364 to 372 are Cytoplasmic-facing; sequence EEKNGVARH. A helical transmembrane segment spans residues 373 to 399; the sequence is ISRFILPIGATVNMDGAALFQCVAAVF. Na(+) is bound by residues G381, T383, and N385. Topologically, residues 400–412 are extracellular; that stretch reads IAQLNHRSLDFVK. An intramembrane region (discontinuously helical) is located at residues 413–446; sequence IITILVTATASSVGAAGIPSGGVLTLAIILEAVN. At 447–459 the chain is on the extracellular side; sequence LPVHDISLILAVD. A helical membrane pass occupies residues 460–481; that stretch reads WLVDRSCTVLNVEGDAFGAGLL. Positions 470 and 474 each coordinate Na(+). Topologically, residues 482–539 are cytoplasmic; it reads QSYLDRTENCNSVPELIQVKSEMPLAALPVPGEEGNPLLKGCPGPAGDADTCEKESVM. S493, S502, and S537 each carry phosphoserine. A disordered region spans residues 518 to 539; the sequence is PLLKGCPGPAGDADTCEKESVM.

It belongs to the dicarboxylate/amino acid:cation symporter (DAACS) (TC 2.A.23) family. SLC1A5 subfamily. As to quaternary structure, homotrimer.

It localises to the cell membrane. Its subcellular location is the melanosome. It carries out the reaction L-glutamine(out) + L-serine(in) + Na(+)(out) = L-glutamine(in) + L-serine(out) + Na(+)(in). The enzyme catalyses L-glutamine(in) + L-serine(out) + Na(+)(out) = L-glutamine(out) + L-serine(in) + Na(+)(in). It catalyses the reaction L-threonine(in) + L-glutamine(out) + Na(+)(out) = L-threonine(out) + L-glutamine(in) + Na(+)(in). The catalysed reaction is L-threonine(out) + L-glutamine(in) + Na(+)(out) = L-threonine(in) + L-glutamine(out) + Na(+)(in). It carries out the reaction L-asparagine(in) + L-glutamine(out) + Na(+)(out) = L-asparagine(out) + L-glutamine(in) + Na(+)(in). The enzyme catalyses L-asparagine(out) + L-glutamine(in) + Na(+)(out) = L-asparagine(in) + L-glutamine(out) + Na(+)(in). It catalyses the reaction L-glutamine(in) + L-alanine(out) + Na(+)(out) = L-glutamine(out) + L-alanine(in) + Na(+)(in). The catalysed reaction is L-valine(out) + L-glutamine(in) + Na(+)(out) = L-valine(in) + L-glutamine(out) + Na(+)(in). It carries out the reaction L-glutamine(in) + L-methionine(out) + Na(+)(out) = L-glutamine(out) + L-methionine(in) + Na(+)(in). The enzyme catalyses L-glutamine(in) + L-glutamate(out) + Na(+)(out) + H(+)(out) = L-glutamine(out) + L-glutamate(in) + Na(+)(in) + H(+)(in). It catalyses the reaction D-serine(in) + L-glutamine(out) + Na(+)(out) = D-serine(out) + L-glutamine(in) + Na(+)(in). The catalysed reaction is D-serine(in) + L-alanine(out) + Na(+)(out) = D-serine(out) + L-alanine(in) + Na(+)(in). It carries out the reaction nitrate(in) = nitrate(out). The enzyme catalyses iodide(out) = iodide(in). It catalyses the reaction thiocyanate(in) = thiocyanate(out). In terms of biological role, sodium-coupled antiporter of neutral amino acids. In a tri-substrate transport cycle, exchanges neutral amino acids between the extracellular and intracellular compartments, coupled to the inward cotransport of at least one sodium ion. The preferred substrate is the essential amino acid L-glutamine, a precursor for biosynthesis of proteins, nucleotides and amine sugars as well as an alternative fuel for mitochondrial oxidative phosphorylation. Exchanges L-glutamine with other neutral amino acids such as L-serine, L-threonine and L-asparagine in a bidirectional way. Provides L-glutamine to proliferating stem and activated cells driving the metabolic switch toward cell differentiation. The transport cycle is usually pH-independent, with the exception of L-glutamate. Transports extracellular L-glutamate coupled to the cotransport of one proton and one sodium ion in exchange for intracellular L-glutamine counter-ion. May provide for L-glutamate uptake in glial cells regulating glutamine/glutamate cycle in the nervous system. Can transport D-amino acids. Mediates D-serine release from the retinal glia potentially affecting NMDA receptor function in retinal neurons. Displays sodium- and amino acid-dependent but uncoupled channel-like anion conductance with a preference SCN(-) &gt;&gt; NO3(-) &gt; I(-) &gt; Cl(-). Through binding of the fusogenic protein syncytin-1/ERVW-1 may mediate trophoblasts syncytialization, the spontaneous fusion of their plasma membranes, an essential process in placental development. This chain is Neutral amino acid transporter B(0) (SLC1A5), found in Bos taurus (Bovine).